The primary structure comprises 509 residues: Lysine--tRNA ligase (509 aa).

Mg(2+)-binding residues include E418 and E425.

The protein belongs to the class-II aminoacyl-tRNA synthetase family. Homodimer. The cofactor is Mg(2+).

It localises to the cytoplasm. The catalysed reaction is tRNA(Lys) + L-lysine + ATP = L-lysyl-tRNA(Lys) + AMP + diphosphate. This is Lysine--tRNA ligase (lysS) from Acinetobacter baylyi (strain ATCC 33305 / BD413 / ADP1).